We begin with the raw amino-acid sequence, 417 residues long: Peptidyl-Asp metalloendopeptidase (417 aa).

The signal sequence occupies residues 1–25 (MLSRSIGKAAGGLVLGLSVAAAAHA). His327 is a Zn(2+) binding site. Glu328 is an active-site residue. 2 residues coordinate Zn(2+): His331 and His337.

It belongs to the peptidase M72 family. Zn(2+) serves as cofactor.

The catalysed reaction is Cleavage of Xaa-|-Asp, Xaa-|-Glu and Xaa-|-cysteic acid bonds.. In terms of biological role, metalloprotease, specifically cleaves on the N-terminal side of aspartyl, glutamyl and cysteic acid residues. This is Peptidyl-Asp metalloendopeptidase from Stenotrophomonas maltophilia (strain K279a).